Reading from the N-terminus, the 477-residue chain is Delayed-rectifier potassium channel regulatory subunit KCNS2 (477 aa).

Over 1-184 the chain is Cytoplasmic; that stretch reads MTRQSLWDVS…LALDNPGYSV (184 aa). The helical transmembrane segment at 185–206 threads the bilayer; sequence LSRVFSVLSILVVLGSIITMCL. Over 207–225 the chain is Extracellular; it reads NSLPDFQIPDSQGNPGEDP. A helical transmembrane segment spans residues 226-248; the sequence is RFEIVEHFGIAWFTFELVARFAV. Over 249-259 the chain is Cytoplasmic; it reads APDFLKFFKNA. The helical transmembrane segment at 260–280 threads the bilayer; that stretch reads LNLIDLMSIVPFYITLVVNLV. Residues 281–290 lie on the Extracellular side of the membrane; that stretch reads VESSPTLANL. A helical; Voltage-sensor membrane pass occupies residues 291 to 311; it reads GRVAQVLRLMRIFRILKLARH. Residues 312-326 lie on the Cytoplasmic side of the membrane; sequence STGLRSLGATLKYSY. A helical transmembrane segment spans residues 327–348; it reads KEVGLLLLYLSVGISIFSVVAY. Residues 349 to 361 are Extracellular-facing; the sequence is TIEKEENEGLATI. Residues 362–373 constitute an intramembrane region (helical); sequence PACWWWATVSMT. Positions 374-379 match the Selectivity filter motif; sequence TVGYGD. The stretch at 374 to 381 is an intramembrane region; the sequence is TVGYGDVV. Residues 382–388 lie on the Extracellular side of the membrane; that stretch reads PGTTAGK. Residues 389–417 form a helical membrane-spanning segment; the sequence is LTASACILAGILVVVLPITLIFNKFSHFY. Residues 418–477 are Cytoplasmic-facing; it reads RRQKQLESAMRSCDFGDGMKEVPSVNLRDYYAHKVKSLMASLTNMSRSSPSELSLDDSLH.

This sequence belongs to the potassium channel family. S (TC 1.A.1.2) subfamily. Kv9.2/KCNS2 sub-subfamily. In terms of assembly, heterotetramer with KCNB1 and KCNB2. Does not form homomultimers. Detected in brain, but not in the other tissues tested. Expression was highest in the olfactory bulb, cerebral cortex, hippocampus, habenula, basolateral amygdaloid nuclei and cerebellum.

It is found in the cell membrane. Its function is as follows. Potassium channel regulatory subunit that modulate the delayed rectifier voltage-gated potassium channel activity of KCNB1 and KCNB2 by altering their kinetics, expression levels, and shifting the half-inactivation potential to more polarized values. While it does not form functional channels on its own, it can form functional heterotetrameric channels with KCNB1 and KCNB2. Each regulatory subunit has unique regulatory properties that can lead to extensive inhibition, significant changes in kinetics, and/or substantial shifts in the voltage dependencies of the inactivation process. The protein is Delayed-rectifier potassium channel regulatory subunit KCNS2 of Mus musculus (Mouse).